Here is a 4023-residue protein sequence, read N- to C-terminus: Hybrid PKS-NRPS synthetase pvhA (4023 aa).

One can recognise a Ketosynthase family 3 (KS3) domain in the interval 7 to 440 (DERIAVIGTG…GTNAHAIIEE (434 aa)). Active-site for beta-ketoacyl synthase activity residues include cysteine 180, histidine 319, and histidine 360. A malonyl-CoA:ACP transacylase (MAT) domain region spans residues 550–871 (VFTGQGAQWA…PYVGLLGRGK (322 aa)). The N-terminal hotdog fold stretch occupies residues 945 to 1080 (HPLLGKRCYD…GVVRATLAEN (136 aa)). Residues 945 to 1249 (HPLLGKRCYD…QAEGLEIVPL (305 aa)) form a dehydratase (DH) domain region. A PKS/mFAS DH domain is found at 945–1255 (HPLLGKRCYD…IVPLAAAVPD (311 aa)). Histidine 978 serves as the catalytic Proton acceptor; for dehydratase activity. The segment at 1099–1255 (DLSPVDTERF…IVPLAAAVPD (157 aa)) is C-terminal hotdog fold. Residue aspartate 1160 is the Proton donor; for dehydratase activity of the active site. Residues 1402 to 1585 (AELYEKAIGF…GFSGTDTISP (184 aa)) are methyltransferase (MT) domain. Positions 2120 to 2291 (TYLLVGLTGE…GVAGSSINIS (172 aa)) are ketoreductase (KR) domain. The Carrier 1 domain occupies 2404–2479 (SIIKEVFLAR…GIIKQVVELL (76 aa)). Serine 2439 carries the post-translational modification O-(pantetheine 4'-phosphoryl)serine. Residues 2490–2580 (TPQTLSKNPA…VMSKPSASSQ (91 aa)) are disordered. The segment covering 2502-2529 (PVKAPVSAPSTPAAASQPVLTDSTASSS) has biased composition (low complexity). Positions 2565 to 2580 (PVNTPNVMSKPSASSQ) are enriched in polar residues. The tract at residues 2604-3043 (PMSHGQEGFW…DIPSWSELDI (440 aa)) is condensation (C) domain. The adenylation (A) (KR) domain stretch occupies residues 3072–3467 (EMITVHGSTT…DGTLVVEGRL (396 aa)). The region spanning 3593–3670 (SVLSGTERQL…AMADAVQKEV (78 aa)) is the Carrier 2 domain. At serine 3630 the chain carries O-(pantetheine 4'-phosphoryl)serine. Residues 3783–3932 (ETDVIMHCVA…IAPVDDMAQS (150 aa)) form a reductase (RED) domain region.

It in the C-terminal section; belongs to the NRP synthetase family.

It functions in the pathway secondary metabolite biosynthesis. In terms of biological role, hybrid PKS-NRPS synthetase; part of the gene cluster that mediates the biosynthesis of varicidin A, an antifungal natural product containing a cis-octahydrodecalin core. The PKS module of pvhA together with the enoylreductase pvhC catalyze the formation of the polyketide unit which is then conjugated to L-isoleucine by the condensation domain of the NRPS module. Activity of the Dieckmann cyclase domain (RED) of pvhA results in release of an acyclic tetramate. The cytochrome P450 monooxygenase pvhE then catalyzes the oxidation of the C21 methyl group to a to carboxylate group. The methyltransferase pvhD then further methylates the pvhE product. The Diels-Alderase pvhB is able to catalyze Diels-Alder cycloaddition using both pvhE and pvhD products as substrates to form the decalin ring, yielding varicidin B and A, respectively. The polypeptide is Hybrid PKS-NRPS synthetase pvhA (Talaromyces variabilis (Penicillium variabile)).